A 180-amino-acid chain; its full sequence is Small ribosomal subunit protein uS4 (180 aa).

The S4 RNA-binding domain occupies 103-174 (RRLQTIVYKK…HPERMMIEKA (72 aa)).

The protein belongs to the universal ribosomal protein uS4 family. As to quaternary structure, part of the 30S ribosomal subunit. Contacts protein S5. The interaction surface between S4 and S5 is involved in control of translational fidelity.

Its function is as follows. One of the primary rRNA binding proteins, it binds directly to 16S rRNA where it nucleates assembly of the body of the 30S subunit. Functionally, with S5 and S12 plays an important role in translational accuracy. The polypeptide is Small ribosomal subunit protein uS4 (Pyrococcus horikoshii (strain ATCC 700860 / DSM 12428 / JCM 9974 / NBRC 100139 / OT-3)).